Here is a 530-residue protein sequence, read N- to C-terminus: Autoinducer-2 kinase (530 aa).

This sequence belongs to the FGGY kinase family.

The protein resides in the cytoplasm. The enzyme catalyses (S)-4,5-dihydroxypentane-2,3-dione + ATP = (2S)-2-hydroxy-3,4-dioxopentyl phosphate + ADP + H(+). In terms of biological role, catalyzes the phosphorylation of autoinducer-2 (AI-2) to phospho-AI-2, which subsequently inactivates the transcriptional regulator LsrR and leads to the transcription of the lsr operon. Phosphorylates the ring-open form of (S)-4,5-dihydroxypentane-2,3-dione (DPD), which is the precursor to all AI-2 signaling molecules, at the C5 position. The polypeptide is Autoinducer-2 kinase (Escherichia coli (strain SMS-3-5 / SECEC)).